A 258-amino-acid chain; its full sequence is Type III pantothenate kinase (258 aa).

6 to 13 lines the ATP pocket; it reads DVGNTNTV. Residues tyrosine 100 and 107–110 each bind substrate; that span reads GADR. Residue aspartate 109 is the Proton acceptor of the active site. Aspartate 129 is a K(+) binding site. Threonine 132 contributes to the ATP binding site. Threonine 184 provides a ligand contact to substrate.

This sequence belongs to the type III pantothenate kinase family. Homodimer. The cofactor is NH4(+). K(+) serves as cofactor.

The protein localises to the cytoplasm. The catalysed reaction is (R)-pantothenate + ATP = (R)-4'-phosphopantothenate + ADP + H(+). Its pathway is cofactor biosynthesis; coenzyme A biosynthesis; CoA from (R)-pantothenate: step 1/5. Its activity is regulated as follows. Not regulated by feedback inhibition by CoA and its thioesters as described for many other pantothenate kinases. Not inhibited by N-pentylpantothenamide (N5-Pan), and this compound cannot act as a substrate either. Functionally, catalyzes the phosphorylation of pantothenate (Pan), the first step in CoA biosynthesis. Cannot utilize a phosphoryl donor other than ATP. The protein is Type III pantothenate kinase (coaX) of Bacillus subtilis (strain 168).